Consider the following 369-residue polypeptide: Mitogen-activated protein kinase 4 (369 aa).

A Protein kinase domain is found at 32–319 (YVPIKPIGRG…VTEALEHPYM (288 aa)). ATP is bound by residues 38 to 46 (IGRGAYGIV) and Lys61. The Proton acceptor role is filled by Asp158. Residue Thr191 is modified to Phosphothreonine. Positions 191-193 (TEY) match the TXY motif. Phosphotyrosine is present on Tyr193.

Belongs to the protein kinase superfamily. CMGC Ser/Thr protein kinase family. MAP kinase subfamily. Dually phosphorylated on Thr-191 and Tyr-193, which activates the enzyme. Expressed in leaves and panicles.

It catalyses the reaction L-seryl-[protein] + ATP = O-phospho-L-seryl-[protein] + ADP + H(+). The catalysed reaction is L-threonyl-[protein] + ATP = O-phospho-L-threonyl-[protein] + ADP + H(+). Its activity is regulated as follows. Activated by threonine and tyrosine phosphorylation. The polypeptide is Mitogen-activated protein kinase 4 (MPK4) (Oryza sativa subsp. japonica (Rice)).